The sequence spans 473 residues: Glutamate-1-semialdehyde 2,1-aminomutase, chloroplastic (473 aa).

The N-terminal 37 residues, 1-37 (MSATLTGSGTALGFSCSSKISKRVSSSPSTRCSIKMS), are a transit peptide targeting the chloroplast. Position 313 is an N6-(pyridoxal phosphate)lysine (lysine 313).

The protein belongs to the class-III pyridoxal-phosphate-dependent aminotransferase family. HemL subfamily. In terms of assembly, homodimer. Requires pyridoxal 5'-phosphate as cofactor.

The protein localises to the plastid. Its subcellular location is the chloroplast. The catalysed reaction is (S)-4-amino-5-oxopentanoate = 5-aminolevulinate. The protein operates within porphyrin-containing compound metabolism; protoporphyrin-IX biosynthesis; 5-aminolevulinate from L-glutamyl-tRNA(Glu): step 2/2. It functions in the pathway porphyrin-containing compound metabolism; chlorophyll biosynthesis. The protein is Glutamate-1-semialdehyde 2,1-aminomutase, chloroplastic (GSA) of Brassica napus (Rape).